Reading from the N-terminus, the 314-residue chain is tRNA-cytidine(32) 2-sulfurtransferase (314 aa).

Residues 46 to 51 carry the PP-loop motif motif; that stretch reads SGGKDS. [4Fe-4S] cluster is bound by residues cysteine 121, cysteine 124, and cysteine 212.

Belongs to the TtcA family. Homodimer. Requires Mg(2+) as cofactor. The cofactor is [4Fe-4S] cluster.

The protein localises to the cytoplasm. It catalyses the reaction cytidine(32) in tRNA + S-sulfanyl-L-cysteinyl-[cysteine desulfurase] + AH2 + ATP = 2-thiocytidine(32) in tRNA + L-cysteinyl-[cysteine desulfurase] + A + AMP + diphosphate + H(+). Its pathway is tRNA modification. Its function is as follows. Catalyzes the ATP-dependent 2-thiolation of cytidine in position 32 of tRNA, to form 2-thiocytidine (s(2)C32). The sulfur atoms are provided by the cysteine/cysteine desulfurase (IscS) system. The polypeptide is tRNA-cytidine(32) 2-sulfurtransferase (Nitrosomonas europaea (strain ATCC 19718 / CIP 103999 / KCTC 2705 / NBRC 14298)).